A 46-amino-acid chain; its full sequence is DNA-directed RNA polymerase subunit Rpo12 (46 aa).

Cys9, Cys24, and Cys27 together coordinate Zn(2+).

This sequence belongs to the archaeal Rpo12/eukaryotic RPC10 RNA polymerase subunit family. As to quaternary structure, part of the RNA polymerase complex. Interacts with Rpo3. Forms an Rpo3-Rpo10-Rpo11-Rpo12 complex upon coexpression. The cofactor is Zn(2+).

It is found in the cytoplasm. The catalysed reaction is RNA(n) + a ribonucleoside 5'-triphosphate = RNA(n+1) + diphosphate. Functionally, DNA-dependent RNA polymerase (RNAP) catalyzes the transcription of DNA into RNA using the four ribonucleoside triphosphates as substrates. In Methanocaldococcus jannaschii (strain ATCC 43067 / DSM 2661 / JAL-1 / JCM 10045 / NBRC 100440) (Methanococcus jannaschii), this protein is DNA-directed RNA polymerase subunit Rpo12.